Reading from the N-terminus, the 411-residue chain is LL-diaminopimelate aminotransferase (411 aa).

Substrate-binding residues include Tyr-15 and Gly-42. Pyridoxal 5'-phosphate is bound by residues Tyr-72, 108–109 (SK), Tyr-132, Asn-187, Tyr-218, and 246–248 (SFS). Residues Lys-109, Tyr-132, and Asn-187 each contribute to the substrate site. Lys-249 is subject to N6-(pyridoxal phosphate)lysine. Residues Arg-257 and Asn-292 each contribute to the pyridoxal 5'-phosphate site. Residues Asn-292 and Arg-388 each coordinate substrate.

This sequence belongs to the class-I pyridoxal-phosphate-dependent aminotransferase family. LL-diaminopimelate aminotransferase subfamily. Homodimer. Pyridoxal 5'-phosphate is required as a cofactor.

The enzyme catalyses (2S,6S)-2,6-diaminopimelate + 2-oxoglutarate = (S)-2,3,4,5-tetrahydrodipicolinate + L-glutamate + H2O + H(+). It participates in amino-acid biosynthesis; L-lysine biosynthesis via DAP pathway; LL-2,6-diaminopimelate from (S)-tetrahydrodipicolinate (aminotransferase route): step 1/1. Its function is as follows. Involved in the synthesis of meso-diaminopimelate (m-DAP or DL-DAP), required for both lysine and peptidoglycan biosynthesis. Catalyzes the direct conversion of tetrahydrodipicolinate to LL-diaminopimelate. The polypeptide is LL-diaminopimelate aminotransferase (Synechococcus elongatus (strain ATCC 33912 / PCC 7942 / FACHB-805) (Anacystis nidulans R2)).